Reading from the N-terminus, the 319-residue chain is Glycine--tRNA ligase alpha subunit (319 aa).

Residues 290-319 (RQQQPEAPAPGPAAVVGGRDRKDACDVKEG) are disordered. Positions 307 to 319 (GRDRKDACDVKEG) are enriched in basic and acidic residues.

Belongs to the class-II aminoacyl-tRNA synthetase family. In terms of assembly, tetramer of two alpha and two beta subunits.

The protein resides in the cytoplasm. The enzyme catalyses tRNA(Gly) + glycine + ATP = glycyl-tRNA(Gly) + AMP + diphosphate. This Moorella thermoacetica (strain ATCC 39073 / JCM 9320) protein is Glycine--tRNA ligase alpha subunit.